Here is a 178-residue protein sequence, read N- to C-terminus: Negative modulator of initiation of replication (178 aa).

The segment at 113-117 (RTRVY) is interaction with DNA.

Belongs to the SeqA family. In terms of assembly, homodimer. Polymerizes to form helical filaments.

It is found in the cytoplasm. Its function is as follows. Negative regulator of replication initiation, which contributes to regulation of DNA replication and ensures that replication initiation occurs exactly once per chromosome per cell cycle. Binds to pairs of hemimethylated GATC sequences in the oriC region, thus preventing assembly of replication proteins and re-initiation at newly replicated origins. Repression is relieved when the region becomes fully methylated. The sequence is that of Negative modulator of initiation of replication from Photobacterium profundum (strain SS9).